The following is a 360-amino-acid chain: Galactoside alpha-(1,2)-fucosyltransferase 1 (360 aa).

Residues 1–8 are Cytoplasmic-facing; it reads MWAPGHHH. Residues 9-27 form a helical; Signal-anchor for type II membrane protein membrane-spanning segment; it reads LCLIFLLTCVFACVFFLLI. Topologically, residues 28 to 360 are lumenal; that stretch reads HQNLFHSGLD…GINADLSPLQ (333 aa). N-linked (GlcNAc...) asparagine glycans are attached at residues Asn-65, Asn-301, and Asn-327.

It belongs to the glycosyltransferase 11 family. Expressed in brain, intestine and kidney.

The protein resides in the golgi apparatus. It localises to the golgi stack membrane. The enzyme catalyses a ganglioside GM1 + GDP-beta-L-fucose = a ganglioside Fuc-GM1 + GDP + H(+). It catalyses the reaction a beta-D-galactosyl-(1-&gt;4)-N-acetyl-beta-D-glucosaminyl derivative + GDP-beta-L-fucose = an alpha-L-Fuc-(1-&gt;2)-beta-D-Gal-(1-&gt;4)-beta-D-GlcNAc derivative + GDP + H(+). The catalysed reaction is a ganglioside GA1 + GDP-beta-L-fucose = a ganglioside Fuc-GA1 + GDP + H(+). It carries out the reaction a beta-D-Gal-(1-&gt;3)-beta-D-GlcNAc-(1-&gt;3)-beta-D-Gal-(1-&gt;4)-beta-D-Glc-(1&lt;-&gt;1')-Cer(d18:1(4E)) + GDP-beta-L-fucose = alpha-L-fucosyl-(1-&gt;2)- beta-D-galactosyl-(1-&gt;3)-N-acetyl-beta-D-glucosaminyl-(1-&gt;3)-beta-D-galactosyl-(1-&gt;4)-beta-D-glucosyl-(1&lt;-&gt;1')-N-acylsphing-4-enine + GDP + H(+). The enzyme catalyses a neolactoside nLc4Cer(d18:1(4E)) + GDP-beta-L-fucose = a neolactoside IV(2)-alpha-Fuc-nLc4Cer(d18:1(4E)) + GDP + H(+). It catalyses the reaction beta-D-galactosyl-(1-&gt;3)-N-acetyl-D-galactosamine + GDP-beta-L-fucose = alpha-L-fucosyl-(1-&gt;2)-beta-D-galactosyl-(1-&gt;3)-N-acetyl-D-galactosamine + GDP + H(+). It participates in protein modification; protein glycosylation. Catalyzes the transfer of L-fucose, from a guanosine diphosphate-beta-L-fucose, to the terminal galactose residue of glycoconjugates through an alpha(1,2) linkage leading to H antigen synthesis that is an intermediate substrate in the synthesis of ABO blood group antigens. H antigen is essential for maturation of the glomerular layer of the main olfactory bulb, in cell migration and early cell-cell contacts during tumor associated angiogenesis. Preferentially fucosylates soluble lactose and to a lesser extent, fucosylates glycolipids gangliosides GA1 and GM1a. The polypeptide is Galactoside alpha-(1,2)-fucosyltransferase 1 (Bos taurus (Bovine)).